We begin with the raw amino-acid sequence, 120 residues long: Large ribosomal subunit protein bL12 (120 aa).

It belongs to the bacterial ribosomal protein bL12 family. As to quaternary structure, homodimer. Part of the ribosomal stalk of the 50S ribosomal subunit. Forms a multimeric L10(L12)X complex, where L10 forms an elongated spine to which 2 to 4 L12 dimers bind in a sequential fashion. Binds GTP-bound translation factors.

Functionally, forms part of the ribosomal stalk which helps the ribosome interact with GTP-bound translation factors. Is thus essential for accurate translation. This Lachnoclostridium phytofermentans (strain ATCC 700394 / DSM 18823 / ISDg) (Clostridium phytofermentans) protein is Large ribosomal subunit protein bL12.